Consider the following 173-residue polypeptide: dCTP deaminase, dUMP-forming (173 aa).

DCTP is bound by residues 93 to 98, aspartate 111, 119 to 121, glutamine 138, and tyrosine 151; these read RSSTGR and TLE. Glutamate 121 serves as the catalytic Proton donor/acceptor.

Belongs to the dCTP deaminase family. Homotrimer.

The catalysed reaction is dCTP + 2 H2O = dUMP + NH4(+) + diphosphate. It participates in pyrimidine metabolism; dUMP biosynthesis; dUMP from dCTP: step 1/1. In terms of biological role, bifunctional enzyme that catalyzes both the deamination of dCTP to dUTP and the hydrolysis of dUTP to dUMP without releasing the toxic dUTP intermediate. The protein is dCTP deaminase, dUMP-forming of Clostridium botulinum (strain Alaska E43 / Type E3).